Here is a 90-residue protein sequence, read N- to C-terminus: Putative regulatory protein Dred_1699 (90 aa).

It belongs to the RemA family.

The sequence is that of Putative regulatory protein Dred_1699 from Desulforamulus reducens (strain ATCC BAA-1160 / DSM 100696 / MI-1) (Desulfotomaculum reducens).